The sequence spans 760 residues: MNWRFVELLYFLFVWGRISVQPSHQEPAGTDQHVSKEFDWLISDRGPFHHSRSYLSFVERHRQGFTTRYKIYREFARWKVRNTAIERRDLVRHPVPLMPEFQRSIRLLGRRPTTQQFIDTIIKKYGTHLLISATLGGEEALTMYMDKSRLDRKSGNATQSVEALHQLASSYFVDRDGTMRRLHEIQISTGAIKVTETRTGLLGCNSYDNLDSVSSVLLQSTESKLHLQGLQIIFPQYLQEKFVQSALSYIMCNGEGEYVCQNSQCRCQCAEEFPQCNCPITDIQIMEFTLANMAKAWTEAYKDLENSDEFKSFMKRLPSNHFLTIGSIHQHWGNDWDLQSRYKLLQSATEAQRQKIQRTARKLFGLSVRCRHNPNHQLPRERTIQQWLARVQSLLYCNENGFWGTFLESQRSCVCHGSTTLCQRPIPCIIGGNNSCAMCSLANISLCGSCNKGYKLYRGRCEPQNVDSERSEQFISFETDLDFQDLELKYLLQKMDSRLYVHTTFISNEIRLDTFFDLRWRKRMSLTLKSNKNRMDFIHMVIGMSMRICQMRNSSLDPMFFVYVNPFSGSHSEGWNMPFGEFGYPRWEKIRLQNSQCYNWTLLLGNRWKTFFETVHIYLRSRTRLPTLRNETGQGPVDLSDPSKRQFYIKISDVQVFGYSLRFNADLLRSAVQQVNQSYTQGGQFYSSSSVMLLMLDIRDRINRLAPPVAPGKPQLDLFSCMLKHRLKLTNSEIIRVNHALDLYNTEILKQSDQMTAKLC.

The N-terminal stretch at 1–16 (MNWRFVELLYFLFVWG) is a signal peptide. The region spanning 68-251 (RYKIYREFAR…FVQSALSYIM (184 aa)) is the MACPF domain. 7 N-linked (GlcNAc...) asparagine glycosylation sites follow: asparagine 156, asparagine 433, asparagine 443, asparagine 553, asparagine 599, asparagine 630, and asparagine 676.

It belongs to the BRINP family.

The protein localises to the cytoplasm. Plays a role in neurogenesis and brain development. May suppress cell cycle progression in postmitotic neurons by inhibiting G1/S transition. In Rattus norvegicus (Rat), this protein is BMP/retinoic acid-inducible neural-specific protein 1 (Brinp1).